The sequence spans 1107 residues: Unconventional myosin-Ib (1107 aa).

Residues 15-701 enclose the Myosin motor domain; the sequence is IGVGDMVLLE…TLFQLEDLRK (687 aa). At Ser-60 the chain carries Phosphoserine. Position 108 to 115 (108 to 115) interacts with ATP; it reads GESGAGKT. Residue Lys-287 forms a Glycyl lysine isopeptide (Lys-Gly) (interchain with G-Cter in SUMO1); alternate linkage. Residue Lys-287 forms a Glycyl lysine isopeptide (Lys-Gly) (interchain with G-Cter in SUMO2); alternate linkage. Positions 592–599 are actin-binding; sequence YIRCIKPN. 5 IQ domains span residues 704–727, 728–749, 750–778, 780–807, and 808–837; these read LEDLATLIQKIYRGWKCRTHFLLM, KRSQVVIAAWYRRYAQQKRYQQ, IKSSALVIQSYIRGWKARKILRELKHQKR, KEAATTIAAYWHGTQARRELKRLKEEAR, and RKHAVAVIWAYWLGLKVRREYRKFFRANAG. One can recognise a TH1 domain in the interval 923–1107; the sequence is KALYPSSVGQ…NNRLLEVAVP (185 aa).

The protein belongs to the TRAFAC class myosin-kinesin ATPase superfamily. Myosin family. In terms of tissue distribution, prominent expression is seen in the brain, lung and liver. It is also expressed in the heart and testis. A high level expression is seen in virtually all neurons (but not glia) in the postnatal and adult mouse brain and in neuroblasts of the cerebellar external granular layer.

Functionally, motor protein that may participate in process critical to neuronal development and function such as cell migration, neurite outgrowth and vesicular transport. The polypeptide is Unconventional myosin-Ib (Myo1b) (Mus musculus (Mouse)).